The following is a 97-amino-acid chain: Protein E7 (97 aa).

The tract at residues 1–40 (MRGHKPTLKEYVLDLYPEPTDLYCYEQLSDSSDEDEGLDR) is E7 terminal domain. The short motif at 22–26 (LYCYE) is the LXCXE motif; interaction with host RB1 and TMEM173/STING element. The segment at 58 to 94 (CHTCNTTVRLCVNSTASDLRTIQQLLMGTVNIVCPTC) is a zinc-finger region. The Nuclear export signal motif lies at 76 to 84 (LRTIQQLLM).

Belongs to the papillomaviridae E7 protein family. In terms of assembly, homodimer. Homooligomer. Interacts with host RB1; this interaction induces dissociation of RB1-E2F1 complex thereby disrupting RB1 activity. Interacts with host EP300; this interaction represses EP300 transcriptional activity. Interacts with protein E2; this interaction inhibits E7 oncogenic activity. Interacts with host TMEM173/STING; this interaction impairs the ability of TMEM173/STING to sense cytosolic DNA and promote the production of type I interferon (IFN-alpha and IFN-beta). Post-translationally, highly phosphorylated.

Its subcellular location is the host cytoplasm. It localises to the host nucleus. Plays a role in viral genome replication by driving entry of quiescent cells into the cell cycle. Stimulation of progression from G1 to S phase allows the virus to efficiently use the cellular DNA replicating machinery to achieve viral genome replication. E7 protein has both transforming and trans-activating activities. Induces the disassembly of the E2F1 transcription factor from RB1, with subsequent transcriptional activation of E2F1-regulated S-phase genes. Interferes with host histone deacetylation mediated by HDAC1 and HDAC2, leading to transcription activation. Also plays a role in the inhibition of both antiviral and antiproliferative functions of host interferon alpha. Interaction with host TMEM173/STING impairs the ability of TMEM173/STING to sense cytosolic DNA and promote the production of type I interferon (IFN-alpha and IFN-beta). The chain is Protein E7 from Human papillomavirus 33.